We begin with the raw amino-acid sequence, 211 residues long: Thiamine-phosphate synthase (211 aa).

Residues Q37–K41 and N69 contribute to the 4-amino-2-methyl-5-(diphosphooxymethyl)pyrimidine site. D70 and D89 together coordinate Mg(2+). S108 lines the 4-amino-2-methyl-5-(diphosphooxymethyl)pyrimidine pocket. T134–T136 contributes to the 2-[(2R,5Z)-2-carboxy-4-methylthiazol-5(2H)-ylidene]ethyl phosphate binding site. K137 contributes to the 4-amino-2-methyl-5-(diphosphooxymethyl)pyrimidine binding site. 2-[(2R,5Z)-2-carboxy-4-methylthiazol-5(2H)-ylidene]ethyl phosphate-binding positions include G166 and V186–S187.

The protein belongs to the thiamine-phosphate synthase family. Mg(2+) serves as cofactor.

It carries out the reaction 2-[(2R,5Z)-2-carboxy-4-methylthiazol-5(2H)-ylidene]ethyl phosphate + 4-amino-2-methyl-5-(diphosphooxymethyl)pyrimidine + 2 H(+) = thiamine phosphate + CO2 + diphosphate. The enzyme catalyses 2-(2-carboxy-4-methylthiazol-5-yl)ethyl phosphate + 4-amino-2-methyl-5-(diphosphooxymethyl)pyrimidine + 2 H(+) = thiamine phosphate + CO2 + diphosphate. It catalyses the reaction 4-methyl-5-(2-phosphooxyethyl)-thiazole + 4-amino-2-methyl-5-(diphosphooxymethyl)pyrimidine + H(+) = thiamine phosphate + diphosphate. The protein operates within cofactor biosynthesis; thiamine diphosphate biosynthesis; thiamine phosphate from 4-amino-2-methyl-5-diphosphomethylpyrimidine and 4-methyl-5-(2-phosphoethyl)-thiazole: step 1/1. Functionally, condenses 4-methyl-5-(beta-hydroxyethyl)thiazole monophosphate (THZ-P) and 2-methyl-4-amino-5-hydroxymethyl pyrimidine pyrophosphate (HMP-PP) to form thiamine monophosphate (TMP). In Salmonella choleraesuis (strain SC-B67), this protein is Thiamine-phosphate synthase.